The chain runs to 136 residues: Translation initiation factor 5A (136 aa).

Position 37 is a hypusine (Lys-37).

It belongs to the eIF-5A family.

It is found in the cytoplasm. Functions by promoting the formation of the first peptide bond. In Thermococcus onnurineus (strain NA1), this protein is Translation initiation factor 5A (eIF5A).